An 874-amino-acid chain; its full sequence is Alanine--tRNA ligase (874 aa).

The Zn(2+) site is built by histidine 563, histidine 567, cysteine 665, and histidine 669.

Belongs to the class-II aminoacyl-tRNA synthetase family. Zn(2+) serves as cofactor.

Its subcellular location is the cytoplasm. It catalyses the reaction tRNA(Ala) + L-alanine + ATP = L-alanyl-tRNA(Ala) + AMP + diphosphate. Its function is as follows. Catalyzes the attachment of alanine to tRNA(Ala) in a two-step reaction: alanine is first activated by ATP to form Ala-AMP and then transferred to the acceptor end of tRNA(Ala). Also edits incorrectly charged Ser-tRNA(Ala) and Gly-tRNA(Ala) via its editing domain. The sequence is that of Alanine--tRNA ligase from Actinobacillus pleuropneumoniae serotype 7 (strain AP76).